The primary structure comprises 591 residues: MVATSKQTTQGYVVEAYGNLLRVHFDGHVRQGEVAYVSVDDTWLKAEIIEVVGDEVKVQVFEETQGISRGALVTFSGHLLEAELGPGLLQGIFDGLQNRLEVLADTSLFLKRGEYVNAICRETVWAYTQKASVGDVLSRGDVLGTVKEGRFDHKIMVPFSCFEEVTITWVISSGDYTVDTVIAKGRTASGAELEFTMVQKWPIKQAFLEGEKVPSHEIMDVGLRVLDTQIPVLKGGTFCTPGPFGAGKTVLQHHLSKYAAVDIVVLCACGERAGEVVEILQEFPHLTDPHTGQSLMHRTCIICNTSSMPVAARESSIYLGITIAEYYRQMGLHVLLLADSTSRWAQALREISGRLEEIPGEEAFPAYLASRIAAFYERGGAVKMKDGSEGSLTICGAVSPAGGNFEEPVTQATLSVVGAFCGLSKARADARRYPSIDPMISWSKYLDSVAEILEKKVPGWGDSVKKASRFLEEGAEIGKRIEVVGEEGISMEDIEIFLKSELYDFCYLQQNAFDAEDCYCPFDRQIELFSLMSHIFSSRFCFDCPDNARSFFLELQSKIKTLNGQKFLSEDYQKGLEVIYKLLESKMVQTA.

242–249 provides a ligand contact to ATP; that stretch reads GPFGAGKT.

Belongs to the ATPase alpha/beta chains family.

It carries out the reaction ATP + H2O + 4 H(+)(in) = ADP + phosphate + 5 H(+)(out). Produces ATP from ADP in the presence of a proton gradient across the membrane. The V-type alpha chain is a catalytic subunit. This is V-type ATP synthase alpha chain (atpA) from Chlamydia muridarum (strain MoPn / Nigg).